A 31-amino-acid chain; its full sequence is Cytochrome b6-f complex subunit 6 (31 aa).

Residues 4–24 (LTSYFGFLLAALTITPALFIG) traverse the membrane as a helical segment.

It belongs to the PetL family. In terms of assembly, the 4 large subunits of the cytochrome b6-f complex are cytochrome b6, subunit IV (17 kDa polypeptide, PetD), cytochrome f and the Rieske protein, while the 4 small subunits are PetG, PetL, PetM and PetN. The complex functions as a dimer.

It localises to the plastid. The protein resides in the chloroplast thylakoid membrane. Functionally, component of the cytochrome b6-f complex, which mediates electron transfer between photosystem II (PSII) and photosystem I (PSI), cyclic electron flow around PSI, and state transitions. PetL is important for photoautotrophic growth as well as for electron transfer efficiency and stability of the cytochrome b6-f complex. The sequence is that of Cytochrome b6-f complex subunit 6 from Agrostis stolonifera (Creeping bentgrass).